A 420-amino-acid chain; its full sequence is MLKMHPNINKYEGVPVTDRIVLAYSGGLDTSVAIGWIGEATGAEVIAVAVDVGQGGESLETVRQRALGCGAVEAYVADARDEFANEYCMPTLKANALYQGHYPLVSAISRPVIVKHLVKAAREFGATTVAHGCTGKGNDQVRFEVGIQTLGPDLKCIAPVRDLALTRDKAIEYAERNNLPIETTKKNPYSIDQNVWGRAVETGYLEDIWNAPTKDIYDYTATPEFPPAPDEAVISFRAGVPVALDGVLLSPLQVIQELNRRAGAQGVGRIDVVEDRLVGIKSREIYEAPGAMTLITAHKHLEDVTIEREQARFKATVSQRWAELVYDGQWFSPLKRSLDVFIDDTQKYVSGDIRVVLHAGVASVNGRRTDTGLYDFNLATYDTGDTFDQSQARGFIELWGLSAKTATTRDERVAASGENA.

23-31 (AYSGGLDTS) contributes to the ATP binding site. Tyr102 contributes to the L-citrulline binding site. Gly132 lines the ATP pocket. Residues Thr134, Asn138, and Asp139 each coordinate L-aspartate. Asn138 serves as a coordination point for L-citrulline. L-citrulline-binding residues include Arg142, Ser190, Glu274, and Tyr286.

It belongs to the argininosuccinate synthase family. Type 1 subfamily. In terms of assembly, homotetramer.

Its subcellular location is the cytoplasm. The enzyme catalyses L-citrulline + L-aspartate + ATP = 2-(N(omega)-L-arginino)succinate + AMP + diphosphate + H(+). It participates in amino-acid biosynthesis; L-arginine biosynthesis; L-arginine from L-ornithine and carbamoyl phosphate: step 2/3. The polypeptide is Argininosuccinate synthase (Renibacterium salmoninarum (strain ATCC 33209 / DSM 20767 / JCM 11484 / NBRC 15589 / NCIMB 2235)).